Consider the following 546-residue polypeptide: CTP synthase (546 aa).

Positions 1-266 are amidoligase domain; it reads MTTRYIFVTG…DDLVVKRFGL (266 aa). Ser-14 provides a ligand contact to CTP. A UTP-binding site is contributed by Ser-14. ATP contacts are provided by residues 15–20 and Asp-72; that span reads SLGKGI. Mg(2+) contacts are provided by Asp-72 and Glu-140. CTP is bound by residues 147 to 149, 187 to 192, and Lys-223; these read DIE and KTKPTQ. UTP contacts are provided by residues 187 to 192 and Lys-223; that span reads KTKPTQ. 239–241 is a binding site for ATP; it reads KDV. Positions 291–542 constitute a Glutamine amidotransferase type-1 domain; that stretch reads VIGMVGKYIE…VAAASAHQKR (252 aa). Gly-352 is a binding site for L-glutamine. The active-site Nucleophile; for glutamine hydrolysis is the Cys-379. Residues 380–383, Glu-403, and Arg-470 contribute to the L-glutamine site; that span reads LGMQ. Active-site residues include His-515 and Glu-517.

The protein belongs to the CTP synthase family. As to quaternary structure, homotetramer.

It carries out the reaction UTP + L-glutamine + ATP + H2O = CTP + L-glutamate + ADP + phosphate + 2 H(+). It catalyses the reaction L-glutamine + H2O = L-glutamate + NH4(+). The catalysed reaction is UTP + NH4(+) + ATP = CTP + ADP + phosphate + 2 H(+). It participates in pyrimidine metabolism; CTP biosynthesis via de novo pathway; CTP from UDP: step 2/2. Allosterically activated by GTP, when glutamine is the substrate; GTP has no effect on the reaction when ammonia is the substrate. The allosteric effector GTP functions by stabilizing the protein conformation that binds the tetrahedral intermediate(s) formed during glutamine hydrolysis. Inhibited by the product CTP, via allosteric rather than competitive inhibition. Its function is as follows. Catalyzes the ATP-dependent amination of UTP to CTP with either L-glutamine or ammonia as the source of nitrogen. Regulates intracellular CTP levels through interactions with the four ribonucleotide triphosphates. The polypeptide is CTP synthase (Shewanella sp. (strain MR-7)).